The primary structure comprises 168 residues: NADH-quinone oxidoreductase subunit B (168 aa).

The [4Fe-4S] cluster site is built by cysteine 37, cysteine 38, cysteine 103, and cysteine 132.

Belongs to the complex I 20 kDa subunit family. NDH-1 is composed of 14 different subunits. Subunits NuoB, C, D, E, F, and G constitute the peripheral sector of the complex. The cofactor is [4Fe-4S] cluster.

Its subcellular location is the cell inner membrane. It catalyses the reaction a quinone + NADH + 5 H(+)(in) = a quinol + NAD(+) + 4 H(+)(out). NDH-1 shuttles electrons from NADH, via FMN and iron-sulfur (Fe-S) centers, to quinones in the respiratory chain. The immediate electron acceptor for the enzyme in this species is believed to be ubiquinone. Couples the redox reaction to proton translocation (for every two electrons transferred, four hydrogen ions are translocated across the cytoplasmic membrane), and thus conserves the redox energy in a proton gradient. This chain is NADH-quinone oxidoreductase subunit B, found in Campylobacter fetus subsp. fetus (strain 82-40).